Here is a 450-residue protein sequence, read N- to C-terminus: Probable galactarate/D-glucarate transporter GudP (450 aa).

The Cytoplasmic segment spans residues 1–20; that stretch reads MSSLSQAASSVEKRTNARYW. Residues 21–41 form a helical membrane-spanning segment; that stretch reads IVVMLFIVTSFNYGDRATLSI. Residues 42–58 are Periplasmic-facing; sequence AGSEMAKDIGLDPVGMG. The helical transmembrane segment at 59–79 threads the bilayer; sequence YVFSAFSWAYVIGQIPGGWLL. Residues 80–85 lie on the Cytoplasmic side of the membrane; the sequence is DRFGSK. Residues 86 to 105 traverse the membrane as a helical segment; the sequence is RVYFWSIFIWSMFTLLQGFV. Over 106–109 the chain is Periplasmic; the sequence is DIFS. Residues 110–132 traverse the membrane as a helical segment; it reads GFGIIVALFTLRFLVGLAEAPSF. Over 133–153 the chain is Cytoplasmic; the sequence is PGNSRIVAAWFPAQERGTAVS. A helical transmembrane segment spans residues 154 to 174; that stretch reads IFNSAQYFATVIFAPIMGWLT. Residues 175–176 are Periplasmic-facing; it reads HE. Residues 177–197 traverse the membrane as a helical segment; sequence VGWSHVFFFMGGLGIVISFIW. Over 198–254 the chain is Cytoplasmic; it reads LKVIHEPNQHPGVNKKELEYIAAGGALINMDQQNTKVKVPFSVKWGQIKQLLGSRMM. The helical transmembrane segment at 255-275 threads the bilayer; that stretch reads IGVYIGQYCINALTYFFITWF. Residues 276–290 are Periplasmic-facing; it reads PVYLVQARGMSILKA. A helical transmembrane segment spans residues 291–311; sequence GFVASVPAVCGFIGGVLGGII. Over 312 to 329 the chain is Cytoplasmic; the sequence is SDWLMRRTGSLNIARKTP. Residues 330–350 traverse the membrane as a helical segment; it reads IVMGMLLSMVMVFCNYVNVEW. Methionine 351 is a topological domain (periplasmic). The chain crosses the membrane as a helical span at residues 352–372; it reads IIGFMALAFFGKGIGALGWAV. Over 373–387 the chain is Cytoplasmic; sequence MADTAPKEISGLSGG. The chain crosses the membrane as a helical span at residues 388 to 408; the sequence is LFNMFGNISGIVTPIAIGYIV. At 409 to 415 the chain is on the periplasmic side; the sequence is GTTGSFN. The chain crosses the membrane as a helical span at residues 416–436; sequence GALIYVGVHALIAVLSYLVLV. The Cytoplasmic portion of the chain corresponds to 437-450; that stretch reads GDIKRIELKPVAGQ.

It belongs to the major facilitator superfamily. Phthalate permease family.

The protein localises to the cell inner membrane. It catalyses the reaction galactarate(in) + H(+)(in) = galactarate(out) + H(+)(out). It carries out the reaction D-glucarate(in) + H(+)(in) = D-glucarate(out) + H(+)(out). The catalysed reaction is (R)-glycerate(in) + H(+)(in) = (R)-glycerate(out) + H(+)(out). Its function is as follows. Probably involved in the uptake of galactarate and/or D-glucarate. May also transport D-glycerate. In Escherichia coli (strain K12), this protein is Probable galactarate/D-glucarate transporter GudP.